The primary structure comprises 208 residues: Na(+)-translocating NADH-quinone reductase subunit D (208 aa).

5 consecutive transmembrane segments (helical) span residues 42-62, 72-92, 103-123, 131-151, and 178-198; these read IVMG…ISLV, IIVQ…LLQA, VFVG…AFAM, LIDG…VATV, and NGLF…IWGL.

It belongs to the NqrDE/RnfAE family. Composed of six subunits; NqrA, NqrB, NqrC, NqrD, NqrE and NqrF.

Its subcellular location is the cell inner membrane. The enzyme catalyses a ubiquinone + n Na(+)(in) + NADH + H(+) = a ubiquinol + n Na(+)(out) + NAD(+). In terms of biological role, NQR complex catalyzes the reduction of ubiquinone-1 to ubiquinol by two successive reactions, coupled with the transport of Na(+) ions from the cytoplasm to the periplasm. NqrA to NqrE are probably involved in the second step, the conversion of ubisemiquinone to ubiquinol. In Neisseria meningitidis serogroup B (strain ATCC BAA-335 / MC58), this protein is Na(+)-translocating NADH-quinone reductase subunit D.